The chain runs to 490 residues: Nuclear distribution protein PAC1 (490 aa).

The stretch at 65–96 forms a coiled coil; that stretch reads STVLRLQKKIIDLENEIHNLTNIINTTNSETN. WD repeat units lie at residues 118-157, 163-204, 205-245, 251-290, 293-327, 328-367, 388-427, and 436-487; these read QCENVVATVRLHPNLPLVFNGCNDGNLYIWNLTNDDNTIP, AHTR…RTLN, GHEH…CLKS, EWCRDLDAVASETQGDFVLTCSNDQSARLSHINSGVGVAM, GHTHVVESVKFLPKIQANELIDEYITKNIDQFPSI, PSELLKDPIYDELGFKYCVSASRDNTIKLWLIPPPTLIPH, GHSSWVKCLSVHPNGKFIISGSDDKTIKFWDLSGLIETGS, and GHEG…NSIK.

The protein belongs to the WD repeat LIS1/nudF family. As to quaternary structure, self-associates. Interacts with NDL1 and dynein.

Its subcellular location is the cytoplasm. The protein localises to the cytoskeleton. It is found in the spindle pole. Its function is as follows. Positively regulates the activity of the minus-end directed microtubule motor protein dynein. Plays a central role in positioning the mitotic spindle at the bud neck during cell division. Targets cytoplasmic dynein to microtubule plus ends, thereby promoting dynein-mediated microtubule sliding along the bud cortex and consequently the movement of the mitotic spindle to the bud neck. In Candida tropicalis (strain ATCC MYA-3404 / T1) (Yeast), this protein is Nuclear distribution protein PAC1.